A 329-amino-acid polypeptide reads, in one-letter code: E3 ubiquitin-protein ligase SINA-like 4 (329 aa).

Residues 1-12 (MTKLGRRNDGGG) show a composition bias toward basic and acidic residues. Residues 1–58 (MTKLGRRNDGGGKSHRSSTKRQRRTSVSVDDPSPGEEEEKTLVVLTDDSDSEEDDKPL) are disordered. Over residues 13–24 (KSHRSSTKRQRR) the composition is skewed to basic residues. An RING-type; degenerate zinc finger spans residues 86-122 (CPNCFDPLKKPIFQCNNGHLACFLCCIKLKKRCSFCK). Residues 136 to 325 (VIKAGLVSCS…MEISIGDKND (190 aa)) form an SBD region. Residues 139 to 198 (AGLVSCSNAIYGCKQSTTYGNQLQSHEKVCVFAPCSCPIKDCNYIGFYKDLINHFRATHK) form an SIAH-type zinc finger. The Zn(2+) site is built by Cys-144, Cys-151, His-164, Cys-168, Cys-175, Cys-180, His-192, and His-197.

It belongs to the SINA (Seven in absentia) family.

The enzyme catalyses S-ubiquitinyl-[E2 ubiquitin-conjugating enzyme]-L-cysteine + [acceptor protein]-L-lysine = [E2 ubiquitin-conjugating enzyme]-L-cysteine + N(6)-ubiquitinyl-[acceptor protein]-L-lysine.. It participates in protein modification; protein ubiquitination. Functionally, E3 ubiquitin-protein ligase that mediates ubiquitination and subsequent proteasomal degradation of target proteins. E3 ubiquitin ligases accept ubiquitin from an E2 ubiquitin-conjugating enzyme in the form of a thioester and then directly transfers the ubiquitin to targeted substrates. It probably triggers the ubiquitin-mediated degradation of different substrates. This chain is E3 ubiquitin-protein ligase SINA-like 4, found in Arabidopsis thaliana (Mouse-ear cress).